The primary structure comprises 339 residues: Biotin synthase (339 aa).

In terms of domain architecture, Radical SAM core spans 55-282; the sequence is NAVQLSTLLS…KAVVRLSAGR (228 aa). 3 residues coordinate [4Fe-4S] cluster: C70, C74, and C77. C114, C145, C205, and R277 together coordinate [2Fe-2S] cluster.

This sequence belongs to the radical SAM superfamily. Biotin synthase family. Homodimer. It depends on [4Fe-4S] cluster as a cofactor. Requires [2Fe-2S] cluster as cofactor.

The catalysed reaction is (4R,5S)-dethiobiotin + (sulfur carrier)-SH + 2 reduced [2Fe-2S]-[ferredoxin] + 2 S-adenosyl-L-methionine = (sulfur carrier)-H + biotin + 2 5'-deoxyadenosine + 2 L-methionine + 2 oxidized [2Fe-2S]-[ferredoxin]. The protein operates within cofactor biosynthesis; biotin biosynthesis; biotin from 7,8-diaminononanoate: step 2/2. In terms of biological role, catalyzes the conversion of dethiobiotin (DTB) to biotin by the insertion of a sulfur atom into dethiobiotin via a radical-based mechanism. In Burkholderia vietnamiensis (strain G4 / LMG 22486) (Burkholderia cepacia (strain R1808)), this protein is Biotin synthase.